Reading from the N-terminus, the 499-residue chain is Glutamyl-tRNA(Gln) amidotransferase subunit A (499 aa).

Residues K76 and S151 each act as charge relay system in the active site. S175 acts as the Acyl-ester intermediate in catalysis.

This sequence belongs to the amidase family. GatA subfamily. In terms of assembly, heterotrimer of A, B and C subunits.

The enzyme catalyses L-glutamyl-tRNA(Gln) + L-glutamine + ATP + H2O = L-glutaminyl-tRNA(Gln) + L-glutamate + ADP + phosphate + H(+). Allows the formation of correctly charged Gln-tRNA(Gln) through the transamidation of misacylated Glu-tRNA(Gln) in organisms which lack glutaminyl-tRNA synthetase. The reaction takes place in the presence of glutamine and ATP through an activated gamma-phospho-Glu-tRNA(Gln). This chain is Glutamyl-tRNA(Gln) amidotransferase subunit A, found in Rhodopirellula baltica (strain DSM 10527 / NCIMB 13988 / SH1).